Reading from the N-terminus, the 130-residue chain is Small ribosomal subunit protein uS9 (130 aa).

This sequence belongs to the universal ribosomal protein uS9 family.

The protein is Small ribosomal subunit protein uS9 of Streptococcus thermophilus (strain CNRZ 1066).